The sequence spans 1102 residues: Avirulence protein AvrXa10 (1102 aa).

Disordered stretches follow at residues 1–68 (MDPI…SAGS) and 127–151 (ARPP…PAAQ). Residues 130-140 (PRAKPAPRRRA) show a composition bias toward basic residues. Positions 141–151 (AQPSDASPAAQ) are enriched in low complexity. Core repeat repeat units follow at residues 288 to 321 (LTPD…QAHG), 322 to 355 (LTPD…QAHG), 356 to 389 (LTPD…QDHG), 390 to 423 (LTPD…QDHG), 424 to 457 (LTPD…QDHG), 458 to 491 (LTPD…QDHG), 492 to 525 (LTPD…QTHG), 526 to 559 (LTPD…QDHG), 560 to 593 (LTPD…QAHG), 594 to 627 (LTPD…QDHG), 628 to 661 (LTPD…QDHG), 662 to 695 (LTPA…QDHG), 696 to 729 (LTPV…QDHG), 730 to 763 (LTPV…QDHG), and 764 to 797 (LTPV…QDHG). One copy of the Core repeat 15.5 repeat lies at 798 to 809 (LTPDQVVAIASN). The Nuclear localization sequence A (NLSA) signature appears at 951-954 (KRVK). The segment covering 978–990 (DLDAPSPMHEGDQ) has biased composition (basic and acidic residues). The tract at residues 978 to 1021 (DLDAPSPMHEGDQTRASSRKRSRSDRAVTGPSTQQSFEVRVPEQ) is disordered. The Nuclear localization sequence B (NLSB) signature appears at 997-1000 (KRSR). Residues 1034 to 1037 (KRPR) carry the Nuclear localization sequence C (NLSC) motif. The interval 1063–1093 (WEQDAAPFAGAADDFPAFNEEELAWLMELLP) is activation domain.

It belongs to the transcription activator-like effector (TALE) family.

It is found in the secreted. The protein resides in the host nucleus. Its function is as follows. Avirulence protein. Induces the hypersensitive response (HR)in rice plants carrying the resistance gene Xa10. Activity depends on the presence of the core repeat domains; replacement with repeat domains from other proteins (AvrBs3 of X.euvesicatoria (AC P14727) or AvrXa7 of this organism) does not elicit the HR. Probably acts as a transcription factor in its host plant (rice) to induce plant resistance or disease. The sequence is that of Avirulence protein AvrXa10 from Xanthomonas oryzae pv. oryzae.